Consider the following 618-residue polypeptide: Probable peptide transporter ptr2 (618 aa).

Residue serine 22 is modified to Phosphoserine. Tyrosine 23 carries the phosphotyrosine modification. 2 positions are modified to phosphoserine: serine 25 and serine 33. The disordered stretch occupies residues 26–50 (KEKKADGSATINTADEQSSTDELQK). A compositionally biased stretch (polar residues) spans 34-50 (ATINTADEQSSTDELQK). Threonine 35 is subject to Phosphothreonine. Serine 44 is modified (phosphoserine). At threonine 45 the chain carries Phosphothreonine. 2 positions are modified to phosphoserine: serine 51 and serine 53. Position 54 is a phosphothreonine (threonine 54). The next 10 membrane-spanning stretches (helical) occupy residues 131–151 (GLSNFFTFWCYVTPVGAALIA), 161–181 (IVCSAVIYFIGILILTCTAIP), 187–207 (GKSMGGFVVSLIIIGLGTGGI), 247–267 (YMIFYWSINVGSLSVLATTSL), 273–293 (FVYAYLLPLCVFVIPLIILAV), 400–420 (FDSIALIIFIPICDNIIYPLL), 430–450 (ILRITLGFMFATASMIYAAVL), 475–495 (VWIQIPAYVLIAFSEIFASIT), 510–530 (SIITALFLFTNAFGAILSICI), and 541–561 (WMYTGIAVTAFIAGIMFWVCF). Serine 594 carries the post-translational modification Phosphoserine. Threonine 618 carries the phosphothreonine modification.

The protein belongs to the major facilitator superfamily. Proton-dependent oligopeptide transporter (POT/PTR) (TC 2.A.17) family.

It localises to the membrane. Functionally, uptake of small peptides. This chain is Probable peptide transporter ptr2 (ptr2), found in Schizosaccharomyces pombe (strain 972 / ATCC 24843) (Fission yeast).